A 174-amino-acid chain; its full sequence is NADH-quinone oxidoreductase subunit B 1 (174 aa).

Residues C53, C54, C118, and C148 each contribute to the [4Fe-4S] cluster site.

Belongs to the complex I 20 kDa subunit family. In terms of assembly, NDH-1 is composed of 14 different subunits. Subunits NuoB, C, D, E, F, and G constitute the peripheral sector of the complex. It depends on [4Fe-4S] cluster as a cofactor.

It localises to the cell inner membrane. The catalysed reaction is a quinone + NADH + 5 H(+)(in) = a quinol + NAD(+) + 4 H(+)(out). In terms of biological role, NDH-1 shuttles electrons from NADH, via FMN and iron-sulfur (Fe-S) centers, to quinones in the respiratory chain. The immediate electron acceptor for the enzyme in this species is believed to be ubiquinone. Couples the redox reaction to proton translocation (for every two electrons transferred, four hydrogen ions are translocated across the cytoplasmic membrane), and thus conserves the redox energy in a proton gradient. The protein is NADH-quinone oxidoreductase subunit B 1 of Cereibacter sphaeroides (strain KD131 / KCTC 12085) (Rhodobacter sphaeroides).